Reading from the N-terminus, the 685-residue chain is Protein arginine N-methyltransferase 7 (685 aa).

SAM-dependent MTase PRMT-type domains lie at 14–355 (QATW…YSLW) and 364–685 (AESI…LKSI).

It belongs to the class I-like SAM-binding methyltransferase superfamily. Protein arginine N-methyltransferase family. PRMT7 subfamily.

Functionally, essential arginine methyltransferase that can both catalyze the formation of omega-N monomethylarginine (MMA) and symmetrical dimethylarginine (sDMA). Specifically mediates the symmetrical dimethylation of arginine residues in the small nuclear ribonucleoproteins SmD1 and SmD3. This Drosophila willistoni (Fruit fly) protein is Protein arginine N-methyltransferase 7 (Art7).